The sequence spans 258 residues: Cytochrome b-c1 complex subunit Rieske-1, mitochondrial (258 aa).

Residues 1-46 (WPVRSAAPSSSAFISANHFSSDDDSSSPRSISPSLASVFLHHTRGF) constitute a mitochondrion transit peptide. The Mitochondrial matrix portion of the chain corresponds to 47–95 (SSNSVSPAHDMGLVPDLPPTVAAIKNPTSKIVYDEHNHERYPPGDPSKR). A helical transmembrane segment spans residues 96-118 (AFAYFVLTGGRFVYASLMRLLIL). The Mitochondrial intermembrane portion of the chain corresponds to 119-258 (KFVLSMSASK…FLEENKLLIG (140 aa)). Positions 161-256 (RRRTEDDISL…YSFLEENKLL (96 aa)) constitute a Rieske domain. 4 residues coordinate [2Fe-2S] cluster: Cys-201, His-203, Cys-220, and His-223. Cys-206 and Cys-222 are oxidised to a cystine.

This sequence belongs to the Rieske iron-sulfur protein family. Component of the ubiquinol-cytochrome c oxidoreductase (cytochrome b-c1 complex, complex III, CIII), a multisubunit enzyme composed of 3 respiratory subunits cytochrome b, cytochrome c1 and Rieske protein, 2 core protein subunits, and several low-molecular weight protein subunits. The complex exists as an obligatory dimer and forms supercomplexes (SCs) in the inner mitochondrial membrane with cytochrome c oxidase (complex IV, CIV). [2Fe-2S] cluster serves as cofactor.

It localises to the mitochondrion inner membrane. The catalysed reaction is a quinol + 2 Fe(III)-[cytochrome c](out) = a quinone + 2 Fe(II)-[cytochrome c](out) + 2 H(+)(out). In terms of biological role, component of the ubiquinol-cytochrome c oxidoreductase, a multisubunit transmembrane complex that is part of the mitochondrial electron transport chain which drives oxidative phosphorylation. The respiratory chain contains 3 multisubunit complexes succinate dehydrogenase (complex II, CII), ubiquinol-cytochrome c oxidoreductase (cytochrome b-c1 complex, complex III, CIII) and cytochrome c oxidase (complex IV, CIV), that cooperate to transfer electrons derived from NADH and succinate to molecular oxygen, creating an electrochemical gradient over the inner membrane that drives transmembrane transport and the ATP synthase. The cytochrome b-c1 complex catalyzes electron transfer from ubiquinol to cytochrome c, linking this redox reaction to translocation of protons across the mitochondrial inner membrane, with protons being carried across the membrane as hydrogens on the quinol. In the process called Q cycle, 2 protons are consumed from the matrix, 4 protons are released into the intermembrane space and 2 electrons are passed to cytochrome c. The Rieske protein is a catalytic core subunit containing a [2Fe-2S] iron-sulfur cluster. It cycles between 2 conformational states during catalysis to transfer electrons from the quinol bound in the Q(0) site in cytochrome b to cytochrome c1. The polypeptide is Cytochrome b-c1 complex subunit Rieske-1, mitochondrial (Nicotiana tabacum (Common tobacco)).